A 603-amino-acid chain; its full sequence is NADH-ubiquinone oxidoreductase chain 5 (603 aa).

16 helical membrane-spanning segments follow: residues 4-24 (LPTLTLISLIILTSPIMLSPL), 38-58 (MAVSYAFMVSMVPAMIFMHSG), 87-107 (LIFMPVALFVTWSIMEFSLWY), 117-137 (FFKYLLLFLITMIILITANNL), 140-160 (LFIGWEGVGIMSFLLIGWWYG), 171-191 (AMIYNRIGDVGFVAAMAWFLL), 211-233 (LPLTGLLLAAMGKSAQFGLHPWL), 241-261 (TPVSALLHSSTMVVAGVFLLI), 273-293 (ILTLTLCVGAITTLFTAICAL), 301-320 (IIAFSTSSQLGLMMVTIGIN), 331-351 (THAFFKAMLFMCSGSIIHSLG), 366-386 (LPFTTTALIIGSLALTGMPFL), 409-429 (LLITFIATSMTAVYSTRIIFF), 457-477 (LMLGSIFAGFLISSNLPPTTV), 488-508 (FMALAVTLLGFALAIELSSFT), and 583-603 (MIKLYFLSFLISLTLGLLLII).

The protein belongs to the complex I subunit 5 family.

The protein resides in the mitochondrion inner membrane. The catalysed reaction is a ubiquinone + NADH + 5 H(+)(in) = a ubiquinol + NAD(+) + 4 H(+)(out). Functionally, core subunit of the mitochondrial membrane respiratory chain NADH dehydrogenase (Complex I) that is believed to belong to the minimal assembly required for catalysis. Complex I functions in the transfer of electrons from NADH to the respiratory chain. The immediate electron acceptor for the enzyme is believed to be ubiquinone. In Dugong dugon (Dugong), this protein is NADH-ubiquinone oxidoreductase chain 5 (MT-ND5).